A 102-amino-acid chain; its full sequence is Large ribosomal subunit protein bL21 (102 aa).

This sequence belongs to the bacterial ribosomal protein bL21 family. Part of the 50S ribosomal subunit. Contacts protein L20.

This protein binds to 23S rRNA in the presence of protein L20. In Geobacter sulfurreducens (strain ATCC 51573 / DSM 12127 / PCA), this protein is Large ribosomal subunit protein bL21.